Consider the following 58-residue polypeptide: Large ribosomal subunit protein uL30 (58 aa).

This sequence belongs to the universal ribosomal protein uL30 family. In terms of assembly, part of the 50S ribosomal subunit.

In Novosphingobium aromaticivorans (strain ATCC 700278 / DSM 12444 / CCUG 56034 / CIP 105152 / NBRC 16084 / F199), this protein is Large ribosomal subunit protein uL30.